Here is a 345-residue protein sequence, read N- to C-terminus: N-acetyl-gamma-glutamyl-phosphate reductase (345 aa).

The active site involves cysteine 149.

Belongs to the NAGSA dehydrogenase family. Type 1 subfamily.

It is found in the cytoplasm. It catalyses the reaction N-acetyl-L-glutamate 5-semialdehyde + phosphate + NADP(+) = N-acetyl-L-glutamyl 5-phosphate + NADPH + H(+). It participates in amino-acid biosynthesis; L-arginine biosynthesis; N(2)-acetyl-L-ornithine from L-glutamate: step 3/4. Its function is as follows. Catalyzes the NADPH-dependent reduction of N-acetyl-5-glutamyl phosphate to yield N-acetyl-L-glutamate 5-semialdehyde. The chain is N-acetyl-gamma-glutamyl-phosphate reductase from Janthinobacterium sp. (strain Marseille) (Minibacterium massiliensis).